The chain runs to 60 residues: Cytotoxin 2a (60 aa).

Cystine bridges form between Cys3/Cys21, Cys14/Cys38, Cys42/Cys53, and Cys54/Cys59.

It belongs to the three-finger toxin family. Short-chain subfamily. Type IA cytotoxin sub-subfamily. As to quaternary structure, monomer in solution; Homodimer and oligomer in the presence of negatively charged lipids forming a pore with a size ranging between 20 and 30 Angstroms. As to expression, expressed by the venom gland.

It localises to the secreted. The protein resides in the target cell membrane. In terms of biological role, shows cytolytic activity on many different cells by forming pore in lipid membranes. In vivo, increases heart rate or kills the animal by cardiac arrest. In addition, it binds to heparin with high affinity, interacts with Kv channel-interacting protein 1 (KCNIP1) in a calcium-independent manner, and binds to integrin alpha-V/beta-3 (ITGAV/ITGB3) with moderate affinity. Preferentially binds acidic phospholipids like phosphatidylserine, phosphatidic acid and phosphatidyl glycerol. Has hemolytic activity towards human erythrocytes (EC(50)=1.024 uM) and cytolytic activity towards various cell lines. This chain is Cytotoxin 2a, found in Naja naja (Indian cobra).